The chain runs to 322 residues: TATA box-binding protein-like 2 (322 aa).

A disordered region spans residues 31-54; sequence PALSSTQDSTYLSGRAGPSRESGA. A compositionally biased stretch (polar residues) spans 32 to 42; that stretch reads ALSSTQDSTYL.

Belongs to the TBP family.

It localises to the nucleus. TATA box-binding transcription factor. Members of the TBP family are differentially required to regulate transcription and development during early embryogenesis. This is TATA box-binding protein-like 2 from Takifugu rubripes (Japanese pufferfish).